A 940-amino-acid polypeptide reads, in one-letter code: Inter-alpha-trypsin inhibitor heavy chain H5 (940 aa).

The signal sequence occupies residues 1–16 (MLLLLGLCLGLSQCVG). In terms of domain architecture, VIT spans 35-161 (VPRQVRLLQR…KAAFFLSYEE (127 aa)). N-linked (GlcNAc...) asparagine glycosylation is found at Asn97 and Asn127. Disordered regions lie at residues 117 to 136 (KSGD…NGEK) and 208 to 227 (SRQR…PSTV). Residue Asn231 is glycosylated (N-linked (GlcNAc...) asparagine). Residues 295 to 478 (NVVFVLDSSA…SQLIGFYDEI (184 aa)) enclose the VWFA domain. The disordered stretch occupies residues 405–432 (DGWEAHGRGDAHPQDPQQHPRGRPRPSL). The segment covering 407 to 417 (WEAHGRGDAHP) has biased composition (basic and acidic residues). Asn508 carries an N-linked (GlcNAc...) asparagine glycan. Residues 541 to 571 (PKTDVPVGPQKAGKDVTGSPRPGGDGERNPN) are disordered. N-linked (GlcNAc...) asparagine glycans are attached at residues Asn774, Asn793, and Asn860.

Belongs to the ITIH family.

Its subcellular location is the secreted. Its function is as follows. May act as a tumor suppressor. In Pongo abelii (Sumatran orangutan), this protein is Inter-alpha-trypsin inhibitor heavy chain H5 (ITIH5).